Here is a 764-residue protein sequence, read N- to C-terminus: 5-methyltetrahydropteroyltriglutamate--homocysteine methyltransferase (764 aa).

5-methyltetrahydropteroyltri-L-glutamate contacts are provided by residues 16 to 19 (RELK) and Lys-115. Residues 435–437 (IGS) and Glu-488 contribute to the L-homocysteine site. L-methionine contacts are provided by residues 435-437 (IGS) and Glu-488. 5-methyltetrahydropteroyltri-L-glutamate is bound by residues 519–520 (RC) and Trp-565. Residue Asp-603 participates in L-homocysteine binding. Asp-603 is an L-methionine binding site. 5-methyltetrahydropteroyltri-L-glutamate is bound at residue Glu-609. Residues His-645, Cys-647, and Glu-669 each coordinate Zn(2+). The active-site Proton donor is His-698. Cys-730 provides a ligand contact to Zn(2+).

Belongs to the vitamin-B12 independent methionine synthase family. Zn(2+) is required as a cofactor.

The catalysed reaction is 5-methyltetrahydropteroyltri-L-glutamate + L-homocysteine = tetrahydropteroyltri-L-glutamate + L-methionine. The protein operates within amino-acid biosynthesis; L-methionine biosynthesis via de novo pathway; L-methionine from L-homocysteine (MetE route): step 1/1. In terms of biological role, catalyzes the transfer of a methyl group from 5-methyltetrahydrofolate to homocysteine resulting in methionine formation. The protein is 5-methyltetrahydropteroyltriglutamate--homocysteine methyltransferase of Burkholderia thailandensis (strain ATCC 700388 / DSM 13276 / CCUG 48851 / CIP 106301 / E264).